A 2016-amino-acid chain; its full sequence is Sodium channel protein type 5 subunit alpha (2016 aa).

The Cytoplasmic segment spans residues 1 to 129; the sequence is MANFLLPRGT…IRRAAVKILV (129 aa). The tract at residues 28-56 is disordered; sequence MAEKQARGSTTLQESREGLPEEEAPRPQL. Position 36 is a phosphoserine (serine 36). Threonine 38 is modified (phosphothreonine). The span at 41-52 shows a compositional bias: basic and acidic residues; it reads ESREGLPEEEAP. The I repeat unit spans residues 113–420; sequence VLSPFHPIRR…VVAMAYEEQN (308 aa). A helical membrane pass occupies residues 130-149; the sequence is HSLFNMLIMCTILTNCVFMA. The Extracellular segment spans residues 150–157; that stretch reads QHDPPPWT. The chain crosses the membrane as a helical span at residues 158–179; the sequence is KYVEYTFTAIYTFESLVKILAR. Topologically, residues 180 to 188 are cytoplasmic; that stretch reads GFCLHAFTF. Residues 189-209 traverse the membrane as a helical segment; that stretch reads LRDPWNWLDFSVIIMAYTTEF. The Extracellular segment spans residues 210 to 216; sequence VDLGNVS. The N-linked (GlcNAc...) asparagine glycan is linked to asparagine 214. A helical transmembrane segment spans residues 217–236; that stretch reads ALRTFRVLRALKTISVISGL. Over 237-249 the chain is Cytoplasmic; sequence KTIVGALIQSVKK. Residues 250–272 traverse the membrane as a helical segment; that stretch reads LADVMVLTVFCLSVFALIGLQLF. The Extracellular segment spans residues 273–357; sequence MGNLRHKCVR…PDHGYTSFDS (85 aa). A disulfide bond links cysteine 280 and cysteine 335. Residues asparagine 283, asparagine 288, asparagine 291, asparagine 318, and asparagine 328 are each glycosylated (N-linked (GlcNAc...) asparagine). Positions 358–378 form an intramembrane region, pore-forming; it reads FAWAFLALFRLMTQDCWERLY. Residues 379 to 386 lie on the Extracellular side of the membrane; sequence QQTLRSAG. A helical transmembrane segment spans residues 387 to 413; that stretch reads KIYMIFFMLVIFLGSFYLVNLILAVVA. At 414 to 719 the chain is on the cytoplasmic side; that stretch reads MAYEEQNQAT…VKLVVMDPFT (306 aa). Phosphoserine occurs at positions 457, 460, 483, and 484. A disordered region spans residues 461-591; sequence LEMSPLAPVN…APGHALHGKK (131 aa). Threonine 486 carries the phosphothreonine modification. Residues 491–503 are compositionally biased toward basic and acidic residues; it reads EDRLPKSDSEDGP. A phosphoserine mark is found at serine 497 and serine 510. Polar residues predominate over residues 509 to 528; it reads LSLTRGLSRTSMKPRSSRGS. Arginine 513 and arginine 526 each carry dimethylated arginine; alternate. Omega-N-methylarginine; alternate is present on residues arginine 513 and arginine 526. Phosphoserine is present on residues serine 539, serine 571, serine 664, and serine 667. Polar residues predominate over residues 570 to 580; the sequence is TSAQGQPSPGT. Dimethylated arginine; alternate is present on arginine 680. Arginine 680 carries the post-translational modification Omega-N-methylarginine; alternate. Residues 699–969 form an II repeat; that stretch reads CCPLWMSIKQ…QLALARIQRG (271 aa). A helical membrane pass occupies residues 720–737; that stretch reads DLTITMCIVLNTLFMALE. At 738 to 746 the chain is on the extracellular side; it reads HYNMTSEFE. Asparagine 740 carries N-linked (GlcNAc...) asparagine glycosylation. The chain crosses the membrane as a helical span at residues 747–769; sequence EMLQVGNLVFTGIFTAEMTFKII. Over 770 to 775 the chain is Cytoplasmic; it reads ALDPYY. The chain crosses the membrane as a helical span at residues 776–796; the sequence is YFQQGWNIFDSIIVILSLMEL. The Extracellular segment spans residues 797–806; it reads GLSRMSNLSV. Asparagine 803 carries an N-linked (GlcNAc...) asparagine glycan. The chain crosses the membrane as a helical span at residues 807 to 821; sequence LRSFRLLRVFKLAKS. Residues 822–838 are Cytoplasmic-facing; the sequence is WPTLNTLIKIIGNSVGA. A helical transmembrane segment spans residues 839–860; that stretch reads LGNLTLVLAIIVFIFAVVGMQL. The Extracellular portion of the chain corresponds to 861-884; the sequence is FGKNYSELRDSDSGLLPRWHMMDF. A glycan (N-linked (GlcNAc...) asparagine) is linked at asparagine 864. Positions 885-903 form an intramembrane region, pore-forming; that stretch reads FHAFLIIFRILCGEWIETM. Over 904 to 912 the chain is Extracellular; sequence WDCMEVSGQ. Residues cysteine 906 and cysteine 915 are joined by a disulfide bond. The helical transmembrane segment at 913-941 threads the bilayer; that stretch reads SLCLLVFLLVMVIGNLVVLNLFLALLLSS. The Cytoplasmic segment spans residues 942–1203; it reads FSADNLTAPD…LRKTCYHIVE (262 aa). The disordered stretch occupies residues 1005 to 1141; it reads IATPYSPPPP…PEDSCSEGST (137 aa). Basic and acidic residues predominate over residues 1015–1030; that stretch reads ETEKVPPTRKETRFEE. Residues 1033–1044 show a composition bias toward low complexity; sequence QPGQGTPGDPEP. Positions 1054-1071 are enriched in acidic residues; that stretch reads SDTDDQEEDEENSLGTEE. The span at 1096-1113 shows a compositional bias: low complexity; sequence SQVSATASSEAEASASQA. Residues 1187-1501 form an III repeat; the sequence is PGKVWWRLRK…KKYYNAMKKL (315 aa). The helical transmembrane segment at 1204 to 1225 threads the bilayer; that stretch reads HSWFETFIIFMILLSSGALAFE. Residues 1226-1236 lie on the Extracellular side of the membrane; that stretch reads DIYLEERKTIK. Residues 1237–1259 form a helical membrane-spanning segment; it reads VLLEYADKMFTYVFVLEMLLKWV. At 1260 to 1268 the chain is on the cytoplasmic side; sequence AYGFKKYFT. The chain crosses the membrane as a helical span at residues 1269 to 1291; that stretch reads NAWCWLDFLIVDVSLVSLVANTL. Residues 1292 to 1297 lie on the Extracellular side of the membrane; the sequence is GFAEMG. A helical membrane pass occupies residues 1298 to 1317; that stretch reads PIKSLRTLRALRPLRALSRF. At 1318–1330 the chain is on the cytoplasmic side; that stretch reads EGMRVVVNALVGA. The helical transmembrane segment at 1331–1355 threads the bilayer; that stretch reads IPSIMNVLLVCLIFWLIFSIMGVNL. Over 1356–1400 the chain is Extracellular; it reads FAGKFGRCINQTEGDLPLNYTIVNNKSQCESLNLTGELYWTKVKV. N-linked (GlcNAc...) asparagine glycans are attached at residues asparagine 1365, asparagine 1374, asparagine 1380, and asparagine 1388. Positions 1401 to 1422 form an intramembrane region, pore-forming; sequence NFDNVGAGYLALLQVATFKGWM. Topologically, residues 1423 to 1445 are extracellular; the sequence is DIMYAAVDSRGYEEQPQWEYNLY. A helical transmembrane segment spans residues 1446-1470; the sequence is MYIYFVIFIIFGSFFTLNLFIGVII. At 1471–1528 the chain is on the cytoplasmic side; the sequence is DNFNQQKKKLGGQDIFMTEEQKKYYNAMKKLGSKKPQKPIPRPLNKYQGFIFDIVTKQ. Phosphoserine; by PKC is present on serine 1503. One copy of the IV repeat lies at 1510–1807; sequence IPRPLNKYQG…WEKFDPEATQ (298 aa). The chain crosses the membrane as a helical span at residues 1529 to 1547; that stretch reads AFDVTIMFLICLNMVTMMV. Residues 1548–1558 are Extracellular-facing; sequence ETDDQSPEKIN. A helical transmembrane segment spans residues 1559–1580; it reads ILAKINLLFVAIFTGECIVKLA. Over 1581-1589 the chain is Cytoplasmic; it reads ALRHYYFTN. A helical membrane pass occupies residues 1590-1612; that stretch reads SWNIFDFVVVILSIVGTVLSDII. The Extracellular portion of the chain corresponds to 1613–1619; it reads QKYFFSP. Residues 1620-1640 form a helical membrane-spanning segment; the sequence is TLFRVIRLARIGRILRLIRGA. Topologically, residues 1641-1650 are cytoplasmic; it reads KGIRTLLFAL. The chain crosses the membrane as a helical span at residues 1651–1679; it reads MMSLPALFNIGLLLFLVMFIYSIFGMANF. The Extracellular portion of the chain corresponds to 1680 to 1697; sequence AYVKWEAGIDDMFNFQTF. The segment at residues 1698–1714 is an intramembrane region (pore-forming); that stretch reads ANSMLCLFQITTSAGWD. The Extracellular portion of the chain corresponds to 1715–1745; it reads GLLSPILNTGPPYCDPTLPNSNGSRGDCGSP. The N-linked (GlcNAc...) asparagine glycan is linked to asparagine 1736. The chain crosses the membrane as a helical span at residues 1746–1771; that stretch reads AVGILFFTTYIIISFLIVVNMYIAII. Over 1772–2016 the chain is Cytoplasmic; it reads LENFSVATEE…SPDRDRESIV (245 aa). Positions 1839-1901 are interaction with FGF13; that stretch reads DLPMVSGDRI…ITTTLRRKHE (63 aa). The region spanning 1901-1930 is the IQ domain; it reads EEVSAMVIQRAFRRHLLQRSLKHASFLFRQ. Residues 1959-1979 are compositionally biased toward low complexity; that stretch reads PLGPPSSSSISSTSFPPSYDS. Residues 1959–2016 form a disordered region; the sequence is PLGPPSSSSISSTSFPPSYDSVTRATSDNLQVRGSDYSHSEDLADFPPSPDRDRESIV. The interval 1974–1977 is interaction with NEDD4, NEDD4L and WWP2; that stretch reads PPSY. Polar residues predominate over residues 1981–1990; the sequence is TRATSDNLQV.

The protein belongs to the sodium channel (TC 1.A.1.10) family. Nav1.5/SCN5A subfamily. As to quaternary structure, cannot form the same regulatory interactions with beta subunits as other Navs do. Interacts with the PDZ domain of the syntrophin SNTA1, SNTB1 and SNTB2. Interacts with NEDD4, NEDD4L, WWP2 and GPD1L. Interacts with CALM. Interacts with FGF13; the interaction is direct and FGF13 may regulate SNC5A density at membranes and function. May also interact with FGF12 and FGF14. Interacts with TMEM233. Interacts with the spider Jingzhaotoxin-I (AC P83974, AC B1P1B7, AC B1P1B8). Interacts with ANK3. Interacts with PKP2 (via N-terminus). Interacts with XIRP2; the interaction is required for normal action potential configuration in the heart. Ubiquitinated by NEDD4L; which promotes its endocytosis. Does not seem to be ubiquitinated by NEDD4 or WWP2. In terms of processing, phosphorylation at Ser-1503 by PKC in a highly conserved cytoplasmic loop slows inactivation of the sodium channel and reduces peak sodium currents. Regulated through phosphorylation by CaMK2D. Post-translationally, lacks the cysteine which covalently binds the conotoxin GVIIJ. This cysteine (position 868) is speculated in other sodium channel subunits alpha to be implied in covalent binding with the sodium channel subunit beta-2 or beta-4. N-glycosylated at Asn-318, probably hinders potential interaction with regulatory subunits. As to expression, found in jejunal circular smooth muscle cells (at protein level). Expressed in human atrial and ventricular cardiac muscle but not in adult skeletal muscle, brain, myometrium, liver, or spleen. Isoform 4 is expressed in brain.

It is found in the cell membrane. The protein resides in the cytoplasm. It localises to the perinuclear region. The protein localises to the sarcolemma. Its subcellular location is the T-tubule. It is found in the cell junction. The enzyme catalyses Na(+)(in) = Na(+)(out). Its activity is regulated as follows. Channel inactivation is regulated by intracellular calcium levels. It is a tetrodotoxin-resistant voltage-gated Na(+) channel (Nav). In terms of biological role, pore-forming subunit of Nav1.5, a voltage-gated sodium (Nav) channel that directly mediates the depolarizing phase of action potentials in excitable membranes. Navs, also called VGSCs (voltage-gated sodium channels) or VDSCs (voltage-dependent sodium channels), operate by switching between closed and open conformations depending on the voltage difference across the membrane. In the open conformation they allow Na(+) ions to selectively pass through the pore, along their electrochemical gradient. The influx of Na(+) ions provokes membrane depolarization, initiating the propagation of electrical signals throughout cells and tissues. Nav1.5 is the predominant sodium channel expressed in myocardial cells and it is responsible for the initial upstroke of the action potential in cardiac myocytes, thereby initiating the heartbeat. Required for normal electrical conduction including formation of the infranodal ventricular conduction system and normal action potential configuration, as a result of its interaction with XIRP2. In Homo sapiens (Human), this protein is Sodium channel protein type 5 subunit alpha.